The chain runs to 267 residues: Phosphatidylglycerol--prolipoprotein diacylglyceryl transferase (267 aa).

3 consecutive transmembrane segments (helical) span residues 18–38 (LSVR…MWFA), 57–77 (FLFY…VLFY), and 95–115 (GGMS…IFAW). Residue Arg140 coordinates a 1,2-diacyl-sn-glycero-3-phospho-(1'-sn-glycerol). Helical transmembrane passes span 173 to 193 (SQLY…QWFI), 200 to 220 (GSVA…IEYF), and 233 to 253 (FISM…GLLI).

The protein belongs to the Lgt family.

The protein resides in the cell inner membrane. It catalyses the reaction L-cysteinyl-[prolipoprotein] + a 1,2-diacyl-sn-glycero-3-phospho-(1'-sn-glycerol) = an S-1,2-diacyl-sn-glyceryl-L-cysteinyl-[prolipoprotein] + sn-glycerol 1-phosphate + H(+). It functions in the pathway protein modification; lipoprotein biosynthesis (diacylglyceryl transfer). Its function is as follows. Catalyzes the transfer of the diacylglyceryl group from phosphatidylglycerol to the sulfhydryl group of the N-terminal cysteine of a prolipoprotein, the first step in the formation of mature lipoproteins. The chain is Phosphatidylglycerol--prolipoprotein diacylglyceryl transferase from Pseudoalteromonas translucida (strain TAC 125).